Reading from the N-terminus, the 670-residue chain is Thrombospondin-type laminin G domain and EAR repeat-containing protein (670 aa).

The signal sequence occupies residues 1 to 20 (MSALLMLCAVLLLLGTPSRG). One can recognise a Laminin G-like domain in the interval 59–278 (GLQFSATEPR…KVTLGSRPPC (220 aa)). EAR repeat units lie at residues 314 to 359 (DYVE…KWTD), 361 to 409 (KFVS…KWSP), 413 to 461 (KFTL…RWNP), 465 to 513 (LFEA…IWLV), 515 to 571 (AFQL…ELNI), 575 to 623 (TFVK…RWQG), and 626 to 669 (GFVA…KLRT). N-linked (GlcNAc...) asparagine glycosylation is present at asparagine 498.

As to expression, in the organ of Corti, expression at postnatal day 1 (P1) is restricted to the basal region of the stereocilia of inner and outer hair cells (at protein level). Expressed in the organ of Corti at P1 and P7, in cochlear ganglion, stria vascularis and vestibular ends at P7, and in inferior colliculus, remaining brainstem, cerebellum, brain hemispheres and retina at P1, P7 and in the adult. Also detected in adult liver, lung, kidney, intestine and testis but not in heart or skeletal muscle.

It localises to the secreted. It is found in the cell surface. The protein resides in the cell projection. Its subcellular location is the stereocilium. Its function is as follows. Plays a critical role in tooth and hair follicle morphogenesis through regulation of the Notch signaling pathway. May play a role in development or function of the auditory system. The chain is Thrombospondin-type laminin G domain and EAR repeat-containing protein from Mus musculus (Mouse).